Consider the following 118-residue polypeptide: uncharacterized protein (118 aa).

Cys11 and Cys14 are oxidised to a cystine.

Belongs to the ArsC family.

This is an uncharacterized protein from Bacillus subtilis (strain 168).